A 424-amino-acid chain; its full sequence is Serine--tRNA ligase (424 aa).

An L-serine-binding site is contributed by 228–230 (TAE). 259–261 (RSE) is an ATP binding site. Glu282 is a binding site for L-serine. An ATP-binding site is contributed by 346–349 (EISS). Ser382 contacts L-serine.

It belongs to the class-II aminoacyl-tRNA synthetase family. Type-1 seryl-tRNA synthetase subfamily. In terms of assembly, homodimer. The tRNA molecule binds across the dimer.

It is found in the cytoplasm. It carries out the reaction tRNA(Ser) + L-serine + ATP = L-seryl-tRNA(Ser) + AMP + diphosphate + H(+). The catalysed reaction is tRNA(Sec) + L-serine + ATP = L-seryl-tRNA(Sec) + AMP + diphosphate + H(+). Its pathway is aminoacyl-tRNA biosynthesis; selenocysteinyl-tRNA(Sec) biosynthesis; L-seryl-tRNA(Sec) from L-serine and tRNA(Sec): step 1/1. In terms of biological role, catalyzes the attachment of serine to tRNA(Ser). Is also able to aminoacylate tRNA(Sec) with serine, to form the misacylated tRNA L-seryl-tRNA(Sec), which will be further converted into selenocysteinyl-tRNA(Sec). The sequence is that of Serine--tRNA ligase from Rhodospirillum centenum (strain ATCC 51521 / SW).